A 432-amino-acid chain; its full sequence is Glutamyl-tRNA reductase (432 aa).

Residues 49–52, serine 109, 114–116, and glutamine 120 each bind substrate; these read TCNR and EGQ. The Nucleophile role is filled by cysteine 50. An NADP(+)-binding site is contributed by 189-194; it reads GAGKMS.

Belongs to the glutamyl-tRNA reductase family. In terms of assembly, homodimer.

It carries out the reaction (S)-4-amino-5-oxopentanoate + tRNA(Glu) + NADP(+) = L-glutamyl-tRNA(Glu) + NADPH + H(+). The protein operates within porphyrin-containing compound metabolism; protoporphyrin-IX biosynthesis; 5-aminolevulinate from L-glutamyl-tRNA(Glu): step 1/2. It functions in the pathway porphyrin-containing compound metabolism; chlorophyll biosynthesis. Its function is as follows. Catalyzes the NADPH-dependent reduction of glutamyl-tRNA(Glu) to glutamate 1-semialdehyde (GSA). The sequence is that of Glutamyl-tRNA reductase from Cyanothece sp. (strain PCC 7425 / ATCC 29141).